Here is a 341-residue protein sequence, read N- to C-terminus: Cathepsin B-like cysteine proteinase 1 (341 aa).

Positions 1–19 (MKYLFFALCLYLYQGISEA) are cleaved as a signal peptide. Residues 20–88 (EVPAEQIPLE…VEDEELEENN (69 aa)) constitute a propeptide, activation peptide. Asn-103 is a glycosylation site (N-linked (GlcNAc...) asparagine). 6 cysteine pairs are disulfide-bonded: Cys-104-Cys-133, Cys-116-Cys-160, Cys-152-Cys-218, Cys-153-Cys-156, Cys-189-Cys-222, and Cys-197-Cys-209. Cys-119 is an active-site residue. Asn-202 carries an N-linked (GlcNAc...) asparagine glycan. Residues His-288 and Asn-308 contribute to the active site.

It belongs to the peptidase C1 family.

Its function is as follows. Expression of the protease correlates with blood-feeding and suggests a role for the protease in blood digestion. The protein is Cathepsin B-like cysteine proteinase 1 (CP-1) of Ostertagia ostertagi (Brown stomach worm).